Consider the following 501-residue polypeptide: MSDDDQELGITESKEHSPGDWYAEVVQKAGLADYAPMGGFIVTRPRGYALWEAIQDNLDGWFKDTGVENAYFPMFIPEDYLEREKDIVEGFDPEVAWVTQGGHDDLDQRLAVRPTSESIIAPYLSQWVRSHRDLPLRVNQWNSVVRWEATETKPFFRTKEFLWQEGHTAHATDEAAWAETTLRLDQYHRLYEDVLGIPVLRGRKPDHDKFPGADTTMSVEALMPDGKSVQGGTSHHLGQSFADAFDITFADEDEAERTAYTTSWGLSWRAIGALVMSHSDDQGLVLPPTVAPKQVVIVPIWQEDTKDDVEQYGAEIAAELEAQGVRVHFDDRDGRNPGFKFNEWELNGVPVRFEIGPNEVEDDEVTVVHRPDGESTVEDRAAIADRVHDHLDEVYDKLYDAAADRLAENVREADNRADILGTIGQHGGYVKAPWCGDQDCEAEIKDQIAAEIVMVPLGEDSAARAASELEGERVPEPDHDGEDCAICGDEATRTAYFAKSY.

It belongs to the class-II aminoacyl-tRNA synthetase family. ProS type 3 subfamily. Homodimer.

The protein localises to the cytoplasm. The enzyme catalyses tRNA(Pro) + L-proline + ATP = L-prolyl-tRNA(Pro) + AMP + diphosphate. Functionally, catalyzes the attachment of proline to tRNA(Pro) in a two-step reaction: proline is first activated by ATP to form Pro-AMP and then transferred to the acceptor end of tRNA(Pro). This chain is Proline--tRNA ligase, found in Halobacterium salinarum (strain ATCC 29341 / DSM 671 / R1).